A 291-amino-acid polypeptide reads, in one-letter code: Beta-lactamase CTX-M-25 (291 aa).

A signal peptide spans 1–30 (MMRKSVRRAMLMTTACVSLLLASVPLCAQA). The active-site Nucleophile; acyl-ester intermediate is the Ser73. The a beta-lactam site is built by Lys76, Ser133, Glu169, and Ser240.

Belongs to the class-A beta-lactamase family. As to quaternary structure, monomer.

It localises to the secreted. It carries out the reaction a beta-lactam + H2O = a substituted beta-amino acid. Its activity is regulated as follows. Inhibited by the beta-lactamase-blocking agents clavulanic acid and tazobactam; in the DH10B strain. Functionally, extended-spectrum beta-lactamase (ESBL) which confers resistance to penicillins, as well as first, second and third-generation cephalosporins. Has cefotaxime-hydrolyzing activity. Inactive against cephalosporin antibiotic, cefoxitin, and the carbapenem, imipenem. The chain is Beta-lactamase CTX-M-25 from Escherichia coli.